The following is a 724-amino-acid chain: Ribosomal protein S6 kinase alpha-1 (724 aa).

At Ser54 the chain carries Phosphoserine. Positions 62–310 constitute a Protein kinase 1 domain; that stretch reads FELLKVLGQG…AEEIKRHIFY (249 aa). ATP is bound by residues 68–76 and Lys94; that span reads LGQGSFGKV. Asp187 functions as the Proton acceptor in the catalytic mechanism. Phosphoserine; by PDPK1 is present on Ser221. Ser296 carries the phosphoserine modification. Residues 311–380 enclose the AGC-kinase C-terminal domain; the sequence is STIDWNKLYR…VATGLMEDDG (70 aa). Residue Thr348 is modified to Phosphothreonine. Residues Ser352, Ser358, and Ser369 each carry the phosphoserine modification. In terms of domain architecture, Protein kinase 2 spans 407 to 664; sequence YVVKETIGVG…AKQVLQHPWI (258 aa). ATP is bound by residues 413 to 421 and Lys436; that span reads IGVGSYSVC. The active-site Proton acceptor is the Asp524. Thr562 carries the post-translational modification Phosphothreonine. Phosphoserine is present on Ser721.

It belongs to the protein kinase superfamily. AGC Ser/Thr protein kinase family. S6 kinase subfamily. As to quaternary structure, forms a complex with either MAPK1/ERK2 or MAPK3/ERK1 in quiescent cells. Transiently dissociates following mitogenic stimulation. Interacts with ETV1/ER81 and FGFR1. The cofactor is Mg(2+). Post-translationally, activated by phosphorylation at Ser-221 by PDPK1. Autophosphorylated on Ser-369, as part of the activation process. May be phosphorylated at Thr-348 and Ser-352 by MAPK1/ERK2 and MAPK3/ERK1. In terms of processing, N-terminal myristoylation results in an activated kinase in the absence of added growth factors. Intestine, thymus, and lung.

Its subcellular location is the nucleus. It localises to the cytoplasm. It catalyses the reaction L-seryl-[protein] + ATP = O-phospho-L-seryl-[protein] + ADP + H(+). It carries out the reaction L-threonyl-[protein] + ATP = O-phospho-L-threonyl-[protein] + ADP + H(+). Its activity is regulated as follows. Upon extracellular signal or mitogen stimulation, phosphorylated at Thr-562 in the C-terminal kinase domain (CTKD) by MAPK1/ERK2 and MAPK3/ERK1. The activated CTKD then autophosphorylates Ser-369, allowing binding of PDPK1, which in turn phosphorylates Ser-221 in the N-terminal kinase domain (NTDK) leading to the full activation of the protein and subsequent phosphorylation of the substrates by the NTKD. Its function is as follows. Serine/threonine-protein kinase that acts downstream of ERK (MAPK1/ERK2 and MAPK3/ERK1) signaling and mediates mitogenic and stress-induced activation of the transcription factors CREB1, ETV1/ER81 and NR4A1/NUR77, regulates translation through RPS6 and EIF4B phosphorylation, and mediates cellular proliferation, survival, and differentiation by modulating mTOR signaling and repressing pro-apoptotic function of BAD and DAPK1. In fibroblast, is required for EGF-stimulated phosphorylation of CREB1, which results in the subsequent transcriptional activation of several immediate-early genes. In response to mitogenic stimulation (EGF and PMA), phosphorylates and activates NR4A1/NUR77 and ETV1/ER81 transcription factors and the cofactor CREBBP. Upon insulin-derived signal, acts indirectly on the transcription regulation of several genes by phosphorylating GSK3B at 'Ser-9' and inhibiting its activity. Phosphorylates RPS6 in response to serum or EGF via an mTOR-independent mechanism and promotes translation initiation by facilitating assembly of the pre-initiation complex. In response to insulin, phosphorylates EIF4B, enhancing EIF4B affinity for the EIF3 complex and stimulating cap-dependent translation. Is involved in the mTOR nutrient-sensing pathway by directly phosphorylating TSC2 at 'Ser-1798', which potently inhibits TSC2 ability to suppress mTOR signaling, and mediates phosphorylation of RPTOR, which regulates mTORC1 activity and may promote rapamycin-sensitive signaling independently of the PI3K/AKT pathway. Also involved in feedback regulation of mTORC1 and mTORC2 by phosphorylating DEPTOR. Mediates cell survival by phosphorylating the pro-apoptotic proteins BAD and DAPK1 and suppressing their pro-apoptotic function. Promotes the survival of hepatic stellate cells by phosphorylating CEBPB in response to the hepatotoxin carbon tetrachloride (CCl4). Mediates induction of hepatocyte prolifration by TGFA through phosphorylation of CEBPB. Is involved in cell cycle regulation by phosphorylating the CDK inhibitor CDKN1B, which promotes CDKN1B association with 14-3-3 proteins and prevents its translocation to the nucleus and inhibition of G1 progression. Phosphorylates EPHA2 at 'Ser-897', the RPS6KA-EPHA2 signaling pathway controls cell migration. In response to mTORC1 activation, phosphorylates EIF4B at 'Ser-406' and 'Ser-422' which stimulates bicarbonate cotransporter SLC4A7 mRNA translation, increasing SLC4A7 protein abundance and function. The protein is Ribosomal protein S6 kinase alpha-1 (Rps6ka1) of Mus musculus (Mouse).